We begin with the raw amino-acid sequence, 413 residues long: Arginine deiminase (413 aa).

Cysteine 403 (amidino-cysteine intermediate) is an active-site residue.

Belongs to the arginine deiminase family.

The protein localises to the cytoplasm. It catalyses the reaction L-arginine + H2O = L-citrulline + NH4(+). It participates in amino-acid degradation; L-arginine degradation via ADI pathway; carbamoyl phosphate from L-arginine: step 1/2. In Clostridium perfringens (strain SM101 / Type A), this protein is Arginine deiminase.